We begin with the raw amino-acid sequence, 79 residues long: Small ribosomal subunit protein bS18B (79 aa).

The protein belongs to the bacterial ribosomal protein bS18 family. As to quaternary structure, part of the 30S ribosomal subunit. Forms a tight heterodimer with protein bS6.

Its function is as follows. Binds as a heterodimer with protein bS6 to the central domain of the 16S rRNA, where it helps stabilize the platform of the 30S subunit. This Saccharopolyspora erythraea (strain ATCC 11635 / DSM 40517 / JCM 4748 / NBRC 13426 / NCIMB 8594 / NRRL 2338) protein is Small ribosomal subunit protein bS18B.